We begin with the raw amino-acid sequence, 509 residues long: Cobyric acid synthase (509 aa).

Positions 262–459 constitute a GATase cobBQ-type domain; sequence ELKVGIIKLP…IHGIFENDDW (198 aa). The Nucleophile role is filled by cysteine 343. Histidine 451 is a catalytic residue.

The protein belongs to the CobB/CobQ family. CobQ subfamily.

It participates in cofactor biosynthesis; adenosylcobalamin biosynthesis. Catalyzes amidations at positions B, D, E, and G on adenosylcobyrinic A,C-diamide. NH(2) groups are provided by glutamine, and one molecule of ATP is hydrogenolyzed for each amidation. The chain is Cobyric acid synthase from Prochlorococcus marinus subsp. pastoris (strain CCMP1986 / NIES-2087 / MED4).